The chain runs to 434 residues: Probable G-protein coupled receptor 150 (434 aa).

The Extracellular segment spans residues 1–3 (MED). Residues 4 to 24 (LFSPSILPPAPNISVPILLGW) form a helical membrane-spanning segment. Topologically, residues 25–43 (GLNLTLGQGAPASGPPSRR) are cytoplasmic. The helical transmembrane segment at 44–64 (VRLVFLGVILVVAVAGNTTVL) threads the bilayer. Topologically, residues 65 to 81 (CRLCGGGGPWAGPKRRK) are extracellular. Residues 82–102 (MDFLLVQLALADLYACGGTAL) traverse the membrane as a helical segment. Residues 103–162 (SQLAWELLGEPRAATGDLACRFLQLLQASGRGASAHLVVLIALERRRAVRLPHGRPLPAR) lie on the Cytoplasmic side of the membrane. Residues 163 to 183 (ALAALGWLLALLLALPPAFVV) form a helical membrane-spanning segment. Topologically, residues 184-237 (RGDSPSPLPPPPPPTSLQPGAPPAARAWPGERRCHGIFAPLPRWHLQVYAFYEA) are extracellular. The segment at 188-210 (PSPLPPPPPPTSLQPGAPPAARA) is disordered. Residues 189 to 205 (SPLPPPPPPTSLQPGAP) are compositionally biased toward pro residues. The helical transmembrane segment at 238–258 (VAGFVAPVTVLGVACGHLLSV) threads the bilayer. The Cytoplasmic segment spans residues 259 to 293 (WWRHRPQAPAAAAPWSASPGRAPAPSALPRAKVQS). A helical transmembrane segment spans residues 294-314 (LKMSLLLALLFVGCELPYFAA). Residues 315–334 (RLAAAWSSGPAGDWEGEGLS) are Extracellular-facing. The chain crosses the membrane as a helical span at residues 335–355 (AALRVVAMANSALNPFVYLFF). The Cytoplasmic portion of the chain corresponds to 356–434 (QAGDCRLRRQ…PLPCSCESAF (79 aa)). Residues 398–407 (WPHPHYHHAR) show a composition bias toward basic residues. A disordered region spans residues 398–434 (WPHPHYHHARREPLDEGGLRPPPPRPRPLPCSCESAF). Residues 417-426 (RPPPPRPRPL) are compositionally biased toward pro residues.

This sequence belongs to the G-protein coupled receptor 1 family.

The protein localises to the cell membrane. In terms of biological role, orphan receptor. This Homo sapiens (Human) protein is Probable G-protein coupled receptor 150 (GPR150).